The chain runs to 180 residues: Nucleoplasmin-3 (180 aa).

At alanine 2 the chain carries N-acetylalanine. Phosphoserine occurs at positions 13 and 16. Arginine 27 carries the post-translational modification Omega-N-methylarginine. The interval 141 to 180 (TMSNDVSEEESEEEEEEEDSDEEEAELCPILPAKKQGGRP) is disordered. Acidic residues predominate over residues 146–166 (VSEEESEEEEEEEDSDEEEAE). Serine 147, serine 151, and serine 160 each carry phosphoserine.

Belongs to the nucleoplasmin family. In terms of assembly, interacts with NPM (via N-terminus). Forms a pentamer with NPM at a ratio 4:1 (NPM3/NPM). Two pentamers form a decamer. In terms of processing, phosphorylated.

It is found in the nucleus. Its subcellular location is the nucleolus. Its function is as follows. Plays a role in the regulation of diverse cellular processes such as ribosome biogenesis, chromatin remodeling or protein chaperoning. Modulates the histone chaperone function and the RNA-binding activity of nucleolar phosphoprotein B23/NPM. Efficiently mediates chromatin remodeling when included in a pentamer containing NPM3 and NPM. The protein is Nucleoplasmin-3 (NPM3) of Pongo abelii (Sumatran orangutan).